Here is a 307-residue protein sequence, read N- to C-terminus: Epimerase family protein ML0860 (307 aa).

The protein belongs to the NAD(P)-dependent epimerase/dehydratase family. SDR39U1 subfamily.

This chain is Epimerase family protein ML0860, found in Mycobacterium leprae (strain TN).